The primary structure comprises 391 residues: DNA repair protein NreA (391 aa).

A C4-type zinc finger spans residues 6–20 (CAECKGKLLCGRSKC). A PIP motif motif is present at residues 382–389 (QTSLASFF).

This sequence belongs to the Nre family. As to quaternary structure, interacts with the DNA polymerase sliding clamp (PCNA) via the PIP (PCNA-interacting peptide) motif.

Its function is as follows. Involved in DNA damage repair. The protein is DNA repair protein NreA of Archaeoglobus fulgidus (strain ATCC 49558 / DSM 4304 / JCM 9628 / NBRC 100126 / VC-16).